The sequence spans 871 residues: Isoleucine--tRNA ligase (871 aa).

The 'HIGH' region signature appears at 57–67; sequence PYANGNLHMGH. E554 lines the L-isoleucyl-5'-AMP pocket. The 'KMSKS' region motif lies at 595-599; it reads KMSKS. K598 serves as a coordination point for ATP.

This sequence belongs to the class-I aminoacyl-tRNA synthetase family. IleS type 1 subfamily. In terms of assembly, monomer.

It is found in the cytoplasm. The catalysed reaction is tRNA(Ile) + L-isoleucine + ATP = L-isoleucyl-tRNA(Ile) + AMP + diphosphate. Catalyzes the attachment of isoleucine to tRNA(Ile). As IleRS can inadvertently accommodate and process structurally similar amino acids such as valine, to avoid such errors it has two additional distinct tRNA(Ile)-dependent editing activities. One activity is designated as 'pretransfer' editing and involves the hydrolysis of activated Val-AMP. The other activity is designated 'posttransfer' editing and involves deacylation of mischarged Val-tRNA(Ile). The sequence is that of Isoleucine--tRNA ligase from Staphylococcus epidermidis.